The following is a 428-amino-acid chain: Cyclic AMP-responsive element-binding protein 3-like protein 4 (428 aa).

A required for transcriptional activation region spans residues 1–68 (MLLGSLFEQT…EFLQMMINPN (68 aa)). Residues 1–294 (MLLGSLFEQT…QTSNKAAQTS (294 aa)) are Cytoplasmic-facing. The disordered stretch occupies residues 71-111 (YSTGPAAAESPESDSGFSDDPRPDTPPQSETSPPLPQPTPV). The 64-residue stretch at 216-279 (ILKKVRRKIR…ISLITQLRKL (64 aa)) folds into the bZIP domain. The segment at 218-247 (KKVRRKIRNKQSAQDSRRRKKEYIDGLESR) is basic motif. The tract at residues 258 to 279 (LHKKVVELEKHNISLITQLRKL) is leucine-zipper. A helical; Signal-anchor for type II membrane protein membrane pass occupies residues 295–315 (TCVLILLFSLALLVFPSYSPF). The Lumenal segment spans residues 316–428 (RSRPSASQED…LSKTARADEM (113 aa)). Residues 339 to 428 (NKGGFSEVAD…LSKTARADEM (90 aa)) are disordered. Positions 354 to 368 (TLHRAQQREEGDPGR) are enriched in basic and acidic residues. N-linked (GlcNAc...) asparagine glycosylation occurs at asparagine 418.

The protein belongs to the bZIP family. ATF subfamily. Binds DNA as a dimer. Post-translationally, controlled by regulated intramembrane proteolysis (RIP). A fragment containing the cytoplasmic transcription factor domain is released by proteolysis. The cleavage seems to be performed sequentially by site-1 and site-2 proteases (PS1 and PS2).

Its subcellular location is the endoplasmic reticulum membrane. The protein resides in the nucleus. In terms of biological role, transcriptional activator. The chain is Cyclic AMP-responsive element-binding protein 3-like protein 4 (creb3l4) from Xenopus tropicalis (Western clawed frog).